Consider the following 158-residue polypeptide: 3-hydroxyacyl-[acyl-carrier-protein] dehydratase FabZ (158 aa).

Residue histidine 57 is part of the active site.

Belongs to the thioester dehydratase family. FabZ subfamily.

The protein resides in the cytoplasm. The catalysed reaction is a (3R)-hydroxyacyl-[ACP] = a (2E)-enoyl-[ACP] + H2O. Involved in unsaturated fatty acids biosynthesis. Catalyzes the dehydration of short chain beta-hydroxyacyl-ACPs and long chain saturated and unsaturated beta-hydroxyacyl-ACPs. This Anaeromyxobacter sp. (strain Fw109-5) protein is 3-hydroxyacyl-[acyl-carrier-protein] dehydratase FabZ.